The following is a 208-amino-acid chain: NAD(P)H-quinone oxidoreductase subunit I (208 aa).

4Fe-4S ferredoxin-type domains follow at residues 55 to 84 (GRIH…VDWV) and 95 to 124 (RNYS…MTEE). Cys64, Cys67, Cys70, Cys74, Cys104, Cys107, Cys110, and Cys114 together coordinate [4Fe-4S] cluster.

The protein belongs to the complex I 23 kDa subunit family. NDH-1 is composed of at least 11 different subunits. [4Fe-4S] cluster serves as cofactor.

The protein localises to the cellular thylakoid membrane. The enzyme catalyses a plastoquinone + NADH + (n+1) H(+)(in) = a plastoquinol + NAD(+) + n H(+)(out). It catalyses the reaction a plastoquinone + NADPH + (n+1) H(+)(in) = a plastoquinol + NADP(+) + n H(+)(out). In terms of biological role, NDH-1 shuttles electrons from an unknown electron donor, via FMN and iron-sulfur (Fe-S) centers, to quinones in the respiratory and/or the photosynthetic chain. The immediate electron acceptor for the enzyme in this species is believed to be plastoquinone. Couples the redox reaction to proton translocation, and thus conserves the redox energy in a proton gradient. In Prochlorococcus marinus (strain AS9601), this protein is NAD(P)H-quinone oxidoreductase subunit I.